The chain runs to 383 residues: L-lactate dehydrogenase (383 aa).

Residues 1-380 form the FMN hydroxy acid dehydrogenase domain; that stretch reads MIVSSTTDFR…NETILAERVP (380 aa). Position 24 (tyrosine 24) interacts with substrate. The FMN site is built by serine 106 and glutamine 127. Tyrosine 129 provides a ligand contact to substrate. FMN is bound at residue threonine 155. Arginine 164 contributes to the substrate binding site. Lysine 251 contributes to the FMN binding site. Histidine 275 serves as the catalytic Proton acceptor. Position 278 (arginine 278) interacts with substrate. 306–330 contributes to the FMN binding site; that stretch reads DGGVRSGLDVVRMLALGARGVLIGR.

This sequence belongs to the FMN-dependent alpha-hydroxy acid dehydrogenase family. FMN serves as cofactor.

The protein localises to the cell inner membrane. The enzyme catalyses (S)-lactate + A = pyruvate + AH2. Functionally, catalyzes the conversion of L-lactate to pyruvate. Is coupled to the respiratory chain. The chain is L-lactate dehydrogenase from Caulobacter vibrioides (strain ATCC 19089 / CIP 103742 / CB 15) (Caulobacter crescentus).